Here is a 716-residue protein sequence, read N- to C-terminus: MIYQSPTIQVELLEDNIAKLCFNAPGSVNKFDRETLASLDAALDSIKQQSNIQALVLTSGKDTFIVGADITEFLGLFAQDDAVLLSWIEQANAVFNKLEDLPFPTASAIKGFALGGGCETILATDFRIADTTAKIGLPETKLGIIPGFGGTVRLPRVIGADNALEWITTGKDQRPEDALKVGAVDAVVAPEALEAAAIQMLKDAVAEKLDWQARRQRKMSPLTLPKLEAMMSFTTAKGMVFAVAGKHYPAPMAAVSVVEQAATKGRSDALQIEHQAFIKLAKTDVAKALIGIFLNDQLVKGKAKKAGKLAKDVKSAAVLGAGIMGGGIAYQSASKGTPIVMKDIAQPALDLGLGEAAKLLSAQVARGRSTPEKMAKVLNNITPALDYAPVKHADVVVEAVVEHPKVKAQVLAEVEQYVSEDAIIASNTSTISINLLAKSMKKPERFCGMHFFNPVHKMPLVEVIRGEHSSEETIASVVAYASKMGKTPIVVNDCPGFFVNRVLFPYFAGFNGLLAEGGDFAAIDKVMEKQFGWPMGPAYLLDVVGLDTGHHAQAVMAEGFPDRMGKSGNDAIDVMFENKRLGQKNGKGFYAYSVDSRGKPKKDVDPTSYELLKAAFGEQKAFDADEIIARTMIPMIIETVRCLEEGIVASPAEADMGLVYGLGFPPFRGGVFRYLDTMGVANFVALADKYAHLGGLYQVTDAMRALAANNGSYYQA.

The tract at residues 1 to 189 (MIYQSPTIQV…KVGAVDAVVA (189 aa)) is enoyl-CoA hydratase/isomerase. A substrate-binding site is contributed by aspartate 296. Residues 311-716 (KDVKSAAVLG…AANNGSYYQA (406 aa)) form a 3-hydroxyacyl-CoA dehydrogenase region. NAD(+)-binding positions include methionine 324, aspartate 343, 400 to 402 (VVE), lysine 407, and serine 429. Histidine 450 serves as the catalytic For 3-hydroxyacyl-CoA dehydrogenase activity. An NAD(+)-binding site is contributed by asparagine 453. Substrate is bound by residues asparagine 500 and tyrosine 660.

In the N-terminal section; belongs to the enoyl-CoA hydratase/isomerase family. The protein in the C-terminal section; belongs to the 3-hydroxyacyl-CoA dehydrogenase family. Heterotetramer of two alpha chains (FadB) and two beta chains (FadA).

It carries out the reaction a (3S)-3-hydroxyacyl-CoA + NAD(+) = a 3-oxoacyl-CoA + NADH + H(+). The catalysed reaction is a (3S)-3-hydroxyacyl-CoA = a (2E)-enoyl-CoA + H2O. It catalyses the reaction a 4-saturated-(3S)-3-hydroxyacyl-CoA = a (3E)-enoyl-CoA + H2O. The enzyme catalyses (3S)-3-hydroxybutanoyl-CoA = (3R)-3-hydroxybutanoyl-CoA. It carries out the reaction a (3Z)-enoyl-CoA = a 4-saturated (2E)-enoyl-CoA. The catalysed reaction is a (3E)-enoyl-CoA = a 4-saturated (2E)-enoyl-CoA. The protein operates within lipid metabolism; fatty acid beta-oxidation. Its function is as follows. Involved in the aerobic and anaerobic degradation of long-chain fatty acids via beta-oxidation cycle. Catalyzes the formation of 3-oxoacyl-CoA from enoyl-CoA via L-3-hydroxyacyl-CoA. It can also use D-3-hydroxyacyl-CoA and cis-3-enoyl-CoA as substrate. The chain is Fatty acid oxidation complex subunit alpha from Shewanella sp. (strain ANA-3).